A 577-amino-acid chain; its full sequence is Thrombomodulin (577 aa).

A signal peptide spans 1–16; that stretch reads MLGIFFLGVLAPASLG. The Extracellular portion of the chain corresponds to 17–517; it reads LSALAKLQPT…GPPSARPVHS (501 aa). A C-type lectin domain is found at 31 to 167; sequence VEHECFALFQ…TETQGFLCEF (137 aa). The N-linked (GlcNAc...) asparagine glycan is linked to Asn-113. Residues Cys-135 and Cys-156 are joined by a disulfide bond. EGF-like domains are found at residues 240 to 280 and 283 to 323; these read GAWN…RSCA and VVQS…HRCE. The N-linked (GlcNAc...) asparagine glycan is linked to Asn-243. Disulfide bonds link Cys-244–Cys-255, Cys-251–Cys-264, Cys-266–Cys-279, Cys-287–Cys-295, Cys-291–Cys-307, Cys-309–Cys-322, Cys-328–Cys-339, Cys-335–Cys-348, Cys-350–Cys-361, Cys-368–Cys-377, Cys-373–Cys-387, Cys-389–Cys-403, Cys-407–Cys-416, Cys-412–Cys-424, Cys-426–Cys-438, Cys-444–Cys-454, Cys-449–Cys-463, and Cys-465–Cys-479. Asn-256 carries N-linked (GlcNAc...) asparagine glycosylation. The EGF-like 3; calcium-binding domain maps to 324–362; that stretch reads DVDDCKQGPNPCPQLCVNTKGGFECFCYDGYELVDGECV. 2 EGF-like domains span residues 364-404 and 403-439; these read LLDP…HKCE and CEMFCNETSCPADCDPNSPTVCECPEGFILDEGSVCT. Asn-408 carries N-linked (GlcNAc...) asparagine glycosylation. Positions 440–480 constitute an EGF-like 6; calcium-binding domain; that stretch reads DIDECSQGECFTSECRNFPGSYECICGPDTALAGQISKDCD. Positions 476–513 are disordered; that stretch reads SKDCDPIPVREDTKEEEGSGEPPVSPTPGSPTGPPSAR. Residues 477–492 are compositionally biased toward basic and acidic residues; it reads KDCDPIPVREDTKEEE. O-linked (Xyl...) (chondroitin sulfate) serine glycosylation is present at Ser-494. Residues 498–512 are compositionally biased toward pro residues; it reads PVSPTPGSPTGPPSA. Residues 518–541 traverse the membrane as a helical segment; the sequence is GVLIGISIASLSLVVALLALLCHL. Over 542–577 the chain is Cytoplasmic; that stretch reads RKKQGAARAELEYKCASSAKEVVLQHVRTDRTLQKF.

In terms of assembly, interacts with ITGAL, ITGAM and ITGB2. Interacts with thrombin/F2; this interaction switches the specificity of thrombin from a procoagulant to an anticoagulant and antifibrinolytic protease. Interacts with ANGP1 and ANGP2; these interactions significantly inhibit the generation of activated PC and TAFIa/CPB2 by the thrombin/thrombomodulin complex. Interacts with PF4; this interaction enhances generation of activated protein C. Interacts with HMGB1; this interaction inhibits HMGB1 inflammatory activity. In terms of tissue distribution, endothelial cells are unique in synthesizing thrombomodulin.

The protein resides in the membrane. Endothelial cell receptor that plays a critical role in regulating several physiological processes including hemostasis, coagulation, fibrinolysis, inflammation, and angiogenesis. Acts as a cofactor for thrombin activation of protein C/PROC on the surface of vascular endothelial cells leading to initiation of the activated protein C anticoagulant pathway. Also accelerates the activation of the plasma carboxypeptidase B2/CPB2, which catalyzes removal of C-terminal basic amino acids from its substrates including kinins or anaphylatoxins leading to fibrinolysis inhibition. Plays critical protective roles in changing the cleavage specificity of protease-activated receptor 1/PAR1, inhibiting endothelial cell permeability and inflammation. Suppresses inflammation distinctly from its anticoagulant cofactor activity by sequestering HMGB1 thereby preventing it from engaging cellular receptors such as RAGE and contributing to the inflammatory response. In Mus musculus (Mouse), this protein is Thrombomodulin (Thbd).